Consider the following 582-residue polypeptide: A-type ATP synthase subunit A 1 (582 aa).

231-238 provides a ligand contact to ATP; sequence GPFGSGKT.

Belongs to the ATPase alpha/beta chains family. In terms of assembly, has multiple subunits with at least A(3), B(3), C, D, E, F, H, I and proteolipid K(x).

The protein resides in the cell membrane. It carries out the reaction ATP + H2O + 4 H(+)(in) = ADP + phosphate + 5 H(+)(out). Component of the A-type ATP synthase that produces ATP from ADP in the presence of a proton gradient across the membrane. The A chain is the catalytic subunit. In Methanospirillum hungatei JF-1 (strain ATCC 27890 / DSM 864 / NBRC 100397 / JF-1), this protein is A-type ATP synthase subunit A 1.